The sequence spans 296 residues: Acetylglutamate kinase (296 aa).

Substrate is bound by residues glycine 67 to glycine 68, arginine 89, and asparagine 194.

This sequence belongs to the acetylglutamate kinase family. ArgB subfamily.

It is found in the cytoplasm. The catalysed reaction is N-acetyl-L-glutamate + ATP = N-acetyl-L-glutamyl 5-phosphate + ADP. It participates in amino-acid biosynthesis; L-arginine biosynthesis; N(2)-acetyl-L-ornithine from L-glutamate: step 2/4. Its function is as follows. Catalyzes the ATP-dependent phosphorylation of N-acetyl-L-glutamate. This Brucella canis (strain ATCC 23365 / NCTC 10854 / RM-666) protein is Acetylglutamate kinase.